The chain runs to 342 residues: Muscleblind-like protein 3 (342 aa).

4 consecutive C3H1-type zinc fingers follow at residues 14–42 (WLTLEVCREFQRGTCSRADAECRFAHPPR), 48–74 (NGRVVACFDSLKGRCTRENCKYLHPPP), 174–202 (TDRLEVCREFQRGNCTRGESECRYAHPTD), and 210–236 (DNSVTICMDYIKGRCSREKCKYFHPPP). The segment covering 316-326 (PSTVSTATPPA) has biased composition (low complexity). Residues 316–342 (PSTVSTATPPASNVPYVPTTTGNQLKY) are disordered. Over residues 333–342 (PTTTGNQLKY) the composition is skewed to polar residues.

It belongs to the muscleblind family.

It localises to the nucleus. Its subcellular location is the cytoplasm. In terms of biological role, mediates pre-mRNA alternative splicing regulation. Acts either as activator or repressor of splicing on specific pre-mRNA targets. Inhibits cardiac troponin-T (TNNT2) pre-mRNA exon inclusion but induces insulin receptor (IR) pre-mRNA exon inclusion in muscle. Antagonizes the alternative splicing activity pattern of CELF proteins. Could inhibit terminal muscle differentiation, acting at approximately the time of myogenin induction. The polypeptide is Muscleblind-like protein 3 (Mbnl3) (Mus musculus (Mouse)).